The sequence spans 342 residues: Probable dual-specificity RNA methyltransferase RlmN (342 aa).

The active-site Proton acceptor is glutamate 91. Positions 97-327 (YKHGNSICVS…TTIRREMGAD (231 aa)) constitute a Radical SAM core domain. Cysteine 104 and cysteine 332 are oxidised to a cystine. [4Fe-4S] cluster contacts are provided by cysteine 111, cysteine 115, and cysteine 118. Residues 158–159 (GE), serine 190, 213–215 (SLH), and asparagine 289 contribute to the S-adenosyl-L-methionine site. The active-site S-methylcysteine intermediate is cysteine 332.

Belongs to the radical SAM superfamily. RlmN family. The cofactor is [4Fe-4S] cluster.

Its subcellular location is the cytoplasm. It carries out the reaction adenosine(2503) in 23S rRNA + 2 reduced [2Fe-2S]-[ferredoxin] + 2 S-adenosyl-L-methionine = 2-methyladenosine(2503) in 23S rRNA + 5'-deoxyadenosine + L-methionine + 2 oxidized [2Fe-2S]-[ferredoxin] + S-adenosyl-L-homocysteine. It catalyses the reaction adenosine(37) in tRNA + 2 reduced [2Fe-2S]-[ferredoxin] + 2 S-adenosyl-L-methionine = 2-methyladenosine(37) in tRNA + 5'-deoxyadenosine + L-methionine + 2 oxidized [2Fe-2S]-[ferredoxin] + S-adenosyl-L-homocysteine. Functionally, specifically methylates position 2 of adenine 2503 in 23S rRNA and position 2 of adenine 37 in tRNAs. The sequence is that of Probable dual-specificity RNA methyltransferase RlmN from Clostridium botulinum (strain Langeland / NCTC 10281 / Type F).